Consider the following 106-residue polypeptide: Large ribosomal subunit protein uL24 (106 aa).

This sequence belongs to the universal ribosomal protein uL24 family. As to quaternary structure, part of the 50S ribosomal subunit.

Its function is as follows. One of two assembly initiator proteins, it binds directly to the 5'-end of the 23S rRNA, where it nucleates assembly of the 50S subunit. In terms of biological role, one of the proteins that surrounds the polypeptide exit tunnel on the outside of the subunit. The chain is Large ribosomal subunit protein uL24 from Desulforamulus reducens (strain ATCC BAA-1160 / DSM 100696 / MI-1) (Desulfotomaculum reducens).